The primary structure comprises 240 residues: Mitochondrial transcription rescue factor 1 (240 aa).

Residues 1-84 constitute a mitochondrion transit peptide; sequence MAMASVKLLA…ECIFPFSVRL (84 aa). Residues 95–127 form a disordered region; the sequence is KKSLQKVDEEDSDEESHHDEMSEQEEELEDDPT. Serine 106 and serine 116 each carry phosphoserine. The span at 116-126 shows a compositional bias: acidic residues; it reads SEQEEELEDDP. The 76-residue stretch at 142-217 folds into the S4 RNA-binding domain; the sequence is FRYDVVLKTG…LKKVFEEKTE (76 aa).

Monomer. Interacts with POLRMT. Interacts (via S4 domain) with MTRFR (via C-terminus). Associates with mitoribosomal S39 large subunit, peptidyl tRNA and nascent chain.

It is found in the mitochondrion matrix. Functionally, mitochondrial RNA-binding protein involved in mitochondrial transcription regulation. Functions as a protective factor to maintain proper mitochondrial RNA level during stress. Acts at the transcription level and its protective function depends on its RNA binding ability. Part of a mitoribosome-associated quality control pathway that prevents aberrant translation by responding to interruptions during elongation. As heterodimer with MTRF, ejects the unfinished nascent chain and peptidyl transfer RNA (tRNA), respectively, from stalled ribosomes. Recruitment of mitoribosome biogenesis factors to these quality control intermediates suggests additional roles for MTRES1 and MTRF during mitoribosome rescue. This is Mitochondrial transcription rescue factor 1 from Homo sapiens (Human).